Reading from the N-terminus, the 172-residue chain is Large ribosomal subunit protein uL10 (172 aa).

It belongs to the universal ribosomal protein uL10 family. As to quaternary structure, part of the ribosomal stalk of the 50S ribosomal subunit. The N-terminus interacts with L11 and the large rRNA to form the base of the stalk. The C-terminus forms an elongated spine to which L12 dimers bind in a sequential fashion forming a multimeric L10(L12)X complex.

Functionally, forms part of the ribosomal stalk, playing a central role in the interaction of the ribosome with GTP-bound translation factors. This Leifsonia xyli subsp. xyli (strain CTCB07) protein is Large ribosomal subunit protein uL10.